Consider the following 395-residue polypeptide: ATP synthase subunit beta, chloroplastic (395 aa).

Gly72 to Thr79 is a binding site for ATP.

This sequence belongs to the ATPase alpha/beta chains family. In terms of assembly, F-type ATPases have 2 components, CF(1) - the catalytic core - and CF(0) - the membrane proton channel. CF(1) has five subunits: alpha(3), beta(3), gamma(1), delta(1), epsilon(1). CF(0) has four main subunits: a(1), b(1), b'(1) and c(9-12).

Its subcellular location is the plastid. The protein localises to the chloroplast thylakoid membrane. The catalysed reaction is ATP + H2O + 4 H(+)(in) = ADP + phosphate + 5 H(+)(out). Its function is as follows. Produces ATP from ADP in the presence of a proton gradient across the membrane. The catalytic sites are hosted primarily by the beta subunits. In Microlepia platyphylla (Plate fern), this protein is ATP synthase subunit beta, chloroplastic.